The chain runs to 313 residues: Ribosomal protein L11 methyltransferase (313 aa).

Residues T164, G185, D207, and N249 each coordinate S-adenosyl-L-methionine.

Belongs to the methyltransferase superfamily. PrmA family.

The protein localises to the cytoplasm. It carries out the reaction L-lysyl-[protein] + 3 S-adenosyl-L-methionine = N(6),N(6),N(6)-trimethyl-L-lysyl-[protein] + 3 S-adenosyl-L-homocysteine + 3 H(+). Functionally, methylates ribosomal protein L11. This chain is Ribosomal protein L11 methyltransferase, found in Clostridium perfringens (strain 13 / Type A).